The sequence spans 339 residues: MNKKIILAIESSCDETAAAVVVNGREVLSNIISSQIDIHTKFGGVVPEVASRKHIEAINAVVEEALEVAGVTFDDIDAIAVTYGPGLVGALLVGLQYAKGLAYSLDKPLIGVNHIEGHISANFIDHKDLEPPFVCLVVSGGHTFVVHVEDYGKFEIIGETRDDAAGEAFDKVARAVGLGYPGGPKIDKLAKEGNSDAIKFPKANFHDDNLDFSFSGVKSAVLNYLNKMEMKNEEINKADVVASFQKAVVEVLTDNAIKTCKMRKADKIAIAGGVASNSALRENLLREGEKRGIKVLFPSPILCTDNAAMIGSAAYFELLKGNISKMSLNAKPNLRLGER.

2 residues coordinate Fe cation: His114 and His118. Substrate contacts are provided by residues 137-141, Asp170, Gly183, Asp187, and Asn277; that span reads VVSGG. Asp305 is a Fe cation binding site.

Belongs to the KAE1 / TsaD family. Fe(2+) serves as cofactor.

The protein resides in the cytoplasm. The catalysed reaction is L-threonylcarbamoyladenylate + adenosine(37) in tRNA = N(6)-L-threonylcarbamoyladenosine(37) in tRNA + AMP + H(+). Functionally, required for the formation of a threonylcarbamoyl group on adenosine at position 37 (t(6)A37) in tRNAs that read codons beginning with adenine. Is involved in the transfer of the threonylcarbamoyl moiety of threonylcarbamoyl-AMP (TC-AMP) to the N6 group of A37, together with TsaE and TsaB. TsaD likely plays a direct catalytic role in this reaction. The protein is tRNA N6-adenosine threonylcarbamoyltransferase of Clostridium perfringens (strain SM101 / Type A).